A 220-amino-acid polypeptide reads, in one-letter code: Sugar transporter SWEET1 (220 aa).

7 helical membrane passes run 9–29 (LMTF…IMPL), 44–64 (VAGL…SYAL), 70–90 (TMLF…FNYW), 106–126 (VMIA…NTVD), 138–158 (LSSV…AIVI), 167–187 (IINV…FGLL), and 191–211 (IYIY…LTLI). The 81-residue stretch at 12–92 (FIQFCATFIT…IYYVFNYWKN (81 aa)) folds into the MtN3/slv 1 domain. One can recognise a MtN3/slv 2 domain in the interval 134–217 (RLGFLSSVVC…LTLIKLYPPQ (84 aa)).

Belongs to the SWEET sugar transporter family.

It localises to the golgi apparatus membrane. It is found in the cell membrane. In terms of biological role, mediates both low-affinity uptake and efflux of sugar across the membrane. In Dictyostelium discoideum (Social amoeba), this protein is Sugar transporter SWEET1 (slc50a1).